The sequence spans 169 residues: Spore protein SP21 (169 aa).

Disordered regions lie at residues Met-1 to Asp-21 and Gln-150 to Ala-169. One can recognise a sHSP domain in the interval Gln-47–Ser-159.

It belongs to the small heat shock protein (HSP20) family.

Functionally, may stabilize cellular components during stress and spore formation. The protein is Spore protein SP21 (hspA) of Stigmatella aurantiaca (strain DW4/3-1).